The sequence spans 124 residues: MANPTQPLPNQWNEMWLVAFGAVPGALVRWQVQNDLLVNVIGAAILGLVVGLPFRPSRQLLLGVGFCGSLTTFSSWMVECSTLISQGAWLSALGLIGLTMGLGLGVAALGFLIGWQFRPSGLGR.

Helical transmembrane passes span Leu-8–Val-28, Asn-34–Phe-54, Leu-60–Cys-80, and Leu-93–Ile-113. Positions 68 and 71 each coordinate Na(+).

It belongs to the fluoride channel Fluc/FEX (TC 1.A.43) family.

The protein resides in the cell inner membrane. The enzyme catalyses fluoride(in) = fluoride(out). Na(+) is not transported, but it plays an essential structural role and its presence is essential for fluoride channel function. Functionally, fluoride-specific ion channel. Important for reducing fluoride concentration in the cell, thus reducing its toxicity. The polypeptide is Fluoride-specific ion channel FluC 2 (Prochlorococcus marinus (strain MIT 9313)).